Consider the following 548-residue polypeptide: Thermostable neutral protease NprT (548 aa).

The first 25 residues, Met-1–Ala-25, serve as a signal peptide directing secretion. The propeptide at Lys-26 to Pro-229 is activation peptide. Residues Asp-289, Asp-291, Gln-293, and Asp-370 each coordinate Ca(2+). Residue His-374 coordinates Zn(2+). Glu-375 is a catalytic residue. Zn(2+) contacts are provided by His-378 and Glu-398. Positions 409, 415, 417, 419, 422, 425, 426, 429, and 432 each coordinate Ca(2+). His-463 functions as the Proton donor in the catalytic mechanism.

This sequence belongs to the peptidase M4 family. Ca(2+) serves as cofactor. The cofactor is Zn(2+).

It localises to the secreted. With respect to regulation, its casein hydrolytic activity is inhibited almost completely by a chelating agent (EDTA), whereas neither diisopropyl fluorophosphate nor phenylmethylsulfonyl fluoride inhibit the proteolytic activity in vitro. Extracellular zinc metalloprotease. This is Thermostable neutral protease NprT (nprT) from Geobacillus stearothermophilus (Bacillus stearothermophilus).